Here is a 515-residue protein sequence, read N- to C-terminus: Bifunctional purine biosynthesis protein PurH (515 aa).

An MGS-like domain is found at 1 to 145; it reads MTKRALISVS…KNHASVTVVV (145 aa).

Belongs to the PurH family.

The catalysed reaction is (6R)-10-formyltetrahydrofolate + 5-amino-1-(5-phospho-beta-D-ribosyl)imidazole-4-carboxamide = 5-formamido-1-(5-phospho-D-ribosyl)imidazole-4-carboxamide + (6S)-5,6,7,8-tetrahydrofolate. It catalyses the reaction IMP + H2O = 5-formamido-1-(5-phospho-D-ribosyl)imidazole-4-carboxamide. Its pathway is purine metabolism; IMP biosynthesis via de novo pathway; 5-formamido-1-(5-phospho-D-ribosyl)imidazole-4-carboxamide from 5-amino-1-(5-phospho-D-ribosyl)imidazole-4-carboxamide (10-formyl THF route): step 1/1. The protein operates within purine metabolism; IMP biosynthesis via de novo pathway; IMP from 5-formamido-1-(5-phospho-D-ribosyl)imidazole-4-carboxamide: step 1/1. The protein is Bifunctional purine biosynthesis protein PurH of Streptococcus equi subsp. zooepidemicus (strain H70).